The primary structure comprises 396 residues: NADH-quinone oxidoreductase subunit D 1 (396 aa).

The protein belongs to the complex I 49 kDa subunit family. NDH-1 is composed of 14 different subunits. Subunits NuoB, C, D, E, F, and G constitute the peripheral sector of the complex.

It localises to the cell inner membrane. The catalysed reaction is a quinone + NADH + 5 H(+)(in) = a quinol + NAD(+) + 4 H(+)(out). In terms of biological role, NDH-1 shuttles electrons from NADH, via FMN and iron-sulfur (Fe-S) centers, to quinones in the respiratory chain. The immediate electron acceptor for the enzyme in this species is believed to be ubiquinone. Couples the redox reaction to proton translocation (for every two electrons transferred, four hydrogen ions are translocated across the cytoplasmic membrane), and thus conserves the redox energy in a proton gradient. In Beijerinckia indica subsp. indica (strain ATCC 9039 / DSM 1715 / NCIMB 8712), this protein is NADH-quinone oxidoreductase subunit D 1.